The sequence spans 732 residues: Ribosomal RNA large subunit methyltransferase K/L (732 aa).

The region spanning 50 to 162 (MAYRICLWSR…RGRLLLGLDL (113 aa)) is the THUMP domain. The disordered stretch occupies residues 396-424 (TERETSSEGDEPQGASGATSRPGPRNDGA).

This sequence belongs to the methyltransferase superfamily. RlmKL family.

It localises to the cytoplasm. It carries out the reaction guanosine(2445) in 23S rRNA + S-adenosyl-L-methionine = N(2)-methylguanosine(2445) in 23S rRNA + S-adenosyl-L-homocysteine + H(+). The catalysed reaction is guanosine(2069) in 23S rRNA + S-adenosyl-L-methionine = N(2)-methylguanosine(2069) in 23S rRNA + S-adenosyl-L-homocysteine + H(+). Specifically methylates the guanine in position 2445 (m2G2445) and the guanine in position 2069 (m7G2069) of 23S rRNA. The chain is Ribosomal RNA large subunit methyltransferase K/L from Chromohalobacter salexigens (strain ATCC BAA-138 / DSM 3043 / CIP 106854 / NCIMB 13768 / 1H11).